Reading from the N-terminus, the 206-residue chain is Elongation factor 1-beta (206 aa).

The residue at position 2 (Ala-2) is an N-acetylalanine. Lys-13 is covalently cross-linked (Glycyl lysine isopeptide (Lys-Gly) (interchain with G-Cter in ubiquitin)). A phosphoserine mark is found at Ser-31 and Ser-86.

This sequence belongs to the EF-1-beta/EF-1-delta family. The eukaryotic elongation factor 1 complex (eEF1) is probably a heterohexamer. Two trimeric complexes, each composed of eEF1A (TEF1 or TEF2), eEF1Balpha (EFB1) and eEF1Bgamma (CAM1 or TEF4), are probably dimerized via the eF1Bgamma subunits. eEF1Balpha interacts directly with eEF1A. eEF1Balpha and eEF1Bgamma form the eEF1B subcomplex with the GEF activity. Post-translationally, S-thiolated in response to oxidative stress, probably inhibiting the protein and causing a reduction in protein synthesis.

It participates in protein biosynthesis; polypeptide chain elongation. In terms of biological role, catalytic subunit of the guanine nucleotide exchange factor (GEF) (eEF1B subcomplex) of the eukaryotic elongation factor 1 complex (eEF1). Stimulates the exchange of GDP for GTP on elongation factor 1A (eEF1A), probably by displacing GDP from the nucleotide binding pocket in eEF1A. The 30-fold higher concentration of GTP compared to GDP in cells favors the formation of eEF1A-GTP, which rapidly forms a ternary complex with aminoacyl-tRNA that in turn displaces eEF1B from the complex. In Saccharomyces cerevisiae (strain ATCC 204508 / S288c) (Baker's yeast), this protein is Elongation factor 1-beta (EFB1).